The following is a 317-amino-acid chain: 2,3-dihydroxyphenylpropionate/2,3-dihydroxicinnamic acid 1,2-dioxygenase 2 (317 aa).

His-115 serves as the catalytic Proton donor. His-179 (proton acceptor) is an active-site residue.

The protein belongs to the LigB/MhpB extradiol dioxygenase family. As to quaternary structure, homotetramer. The cofactor is Fe(2+).

It catalyses the reaction 3-(2,3-dihydroxyphenyl)propanoate + O2 = (2Z,4E)-2-hydroxy-6-oxonona-2,4-dienedioate + H(+). The enzyme catalyses (2E)-3-(2,3-dihydroxyphenyl)prop-2-enoate + O2 = (2Z,4E,7E)-2-hydroxy-6-oxonona-2,4,7-trienedioate + H(+). It functions in the pathway aromatic compound metabolism; 3-phenylpropanoate degradation. Functionally, catalyzes the non-heme iron(II)-dependent oxidative cleavage of 2,3-dihydroxyphenylpropionic acid and 2,3-dihydroxicinnamic acid into 2-hydroxy-6-ketononadienedioate and 2-hydroxy-6-ketononatrienedioate, respectively. The chain is 2,3-dihydroxyphenylpropionate/2,3-dihydroxicinnamic acid 1,2-dioxygenase 2 from Dechloromonas aromatica (strain RCB).